The following is a 92-amino-acid chain: MGRECEITGKKTMFGNNVPRKGLSRKKGGGGQHIGVKTRRTFKVNLINKKFFVPELGKSINIKVSASTLRSISKLGLSVFLKKNSKKIEDFI.

The interval 1-34 (MGRECEITGKKTMFGNNVPRKGLSRKKGGGGQHI) is disordered.

Belongs to the bacterial ribosomal protein bL28 family.

The protein is Large ribosomal subunit protein bL28 of Borrelia turicatae (strain 91E135).